The primary structure comprises 459 residues: E3 ubiquitin-protein ligase RNF25 (459 aa).

Positions 18 to 128 (SEVEVLESIY…EKGKEILTDN (111 aa)) constitute an RWD domain. Zn(2+) is bound by residues Cys-135, Cys-138, Cys-153, His-155, His-158, Cys-161, Cys-198, and Cys-201. Residues 135–202 (CVICLYGFQE…AVGVQCPVCR (68 aa)) form an RING-type zinc finger. 2 disordered regions span residues 268–309 (PPAP…PPLP) and 322–459 (TRSN…KDGS). Positions 282–303 (KGSQPPSTLAAELSTSPAVQST) are enriched in polar residues. Composition is skewed to basic and acidic residues over residues 349–370 (QPER…RDTQ), 378–389 (PLKEPMDLKPEP), 413–424 (RTRDCVRWERSK), and 446–459 (TRRE…KDGS). Residue Ser-450 is modified to Phosphoserine.

It belongs to the RNF25 family. Interacts with UBE2D2, and may also interact with UBE2E1 and UBE2E3. Interacts with RELA/p65. Ubiquitinated; autoubiquitinated.

Its subcellular location is the cytoplasm. It catalyses the reaction S-ubiquitinyl-[E2 ubiquitin-conjugating enzyme]-L-cysteine + [acceptor protein]-L-lysine = [E2 ubiquitin-conjugating enzyme]-L-cysteine + N(6)-ubiquitinyl-[acceptor protein]-L-lysine.. The protein operates within protein modification; protein ubiquitination. In terms of biological role, E3 ubiquitin-protein ligase that plays a key role in the RNF14-RNF25 translation quality control pathway, a pathway that takes place when a ribosome has stalled during translation, and which promotes ubiquitination and degradation of translation factors on stalled ribosomes. Catalyzes ubiquitination of RPS27A in response to ribosome collisions, promoting activation of RNF14. RNF25 catalyzes ubiquitination of other ribosomal proteins on stalled ribosomes, such as RPL0, RPL1, RPL12, RPS13 and RPS17. Also involved in ubiquitination and degradation of stalled ETF1/eRF1. Independently of its function in the response to stalled ribosomes, mediates ubiquitination and subsequent proteasomal degradation of NKD2. May also stimulate transcription mediated by NF-kappa-B via its interaction with RELA/p65. The polypeptide is E3 ubiquitin-protein ligase RNF25 (Homo sapiens (Human)).